The sequence spans 77 residues: Metallocarboxypeptidase inhibitor (77 aa).

Residues Met1–Phe32 form the signal peptide. Position 33 is a pyrrolidone carboxylic acid (Gln33). 3 cysteine pairs are disulfide-bonded: Cys39/Cys55, Cys43/Cys58, and Cys49/Cys65. A propeptide spans Gly70–Val77 (hydrophobic peptide).

This sequence to potato MCPI. In terms of tissue distribution, ovaries.

In terms of biological role, may play a defensive role against insect attacks. The sequence is that of Metallocarboxypeptidase inhibitor from Solanum lycopersicum (Tomato).